The primary structure comprises 343 residues: Heat-inducible transcription repressor HrcA (343 aa).

Belongs to the HrcA family.

In terms of biological role, negative regulator of class I heat shock genes (grpE-dnaK-dnaJ and groELS operons). Prevents heat-shock induction of these operons. The protein is Heat-inducible transcription repressor HrcA of Mycobacterium marinum (strain ATCC BAA-535 / M).